The sequence spans 257 residues: Protein CUSTOS (257 aa).

A compositionally biased stretch (low complexity) spans 1-11 (MSDLESSSSSS). The tract at residues 1–72 (MSDLESSSSS…HEQDGNELQT (72 aa)) is disordered. The segment covering 32–41 (QRPRGPEKPG) has biased composition (basic and acidic residues). Residue S55 is modified to Phosphoserine. Residue T73 is modified to Phosphothreonine. Disordered regions lie at residues 120–157 (FTSIPGGPEKEAAPQPCRKRLPSSSSSDDGDEELRRCR) and 170–257 (SAIH…VPSN). Basic residues-rich tracts occupy residues 180-190 (KKKKRKLKKKA) and 227-237 (TKKKKRKKKTK). A Nucleolar localization signal (NLS) motif is present at residues 228-236 (KKKKRKKKT).

This sequence belongs to the CUSTOS family.

It localises to the nucleus envelope. Plays a role in the regulation of Wnt signaling pathway during early development. The polypeptide is Protein CUSTOS (Bos taurus (Bovine)).